Consider the following 464-residue polypeptide: Probable multidrug resistance protein NorM (464 aa).

Transmembrane regions (helical) follow at residues 22–42 (LIKLALPAMGENVLQMLFGMA), 64–84 (VFWVVQVVLIAASMGATVTIA), 104–124 (FLAIFTGVILTALTPLSDVLI), 142–162 (LKVILSGSMGFSIMAVFSAML), 172–192 (MIVTGLTNFLNIFLDYAMIFG), 204–224 (AAVATILSRFVGAGILTYVIF), 258–278 (FVFSTGVLMFANILLIAGAEA), 288–308 (VESLSFMPAFGISVAITTLVG), 326–346 (GWILSLLFQVTVGIIIFLFPE), 358–378 (IIEISKLPVKIIGLFQFFLAI), 384–404 (GALRGTGNTLPPMIITFISIW), and 410–430 (VAFVMVKYFQLGLLGAWIGMI).

It belongs to the multi antimicrobial extrusion (MATE) (TC 2.A.66.1) family.

It is found in the cell membrane. Multidrug efflux pump. The sequence is that of Probable multidrug resistance protein NorM (norM) from Thermotoga maritima (strain ATCC 43589 / DSM 3109 / JCM 10099 / NBRC 100826 / MSB8).